The sequence spans 94 residues: uncharacterized protein (94 aa).

The signal sequence occupies residues 1 to 26; that stretch reads MNDQRDQAVPWATGLAVAGFVAAVIA. The next 2 membrane-spanning stretches (helical) occupy residues 42–62 and 71–91; these read LLAV…LWGW and FVLG…ALTL.

It is found in the cell membrane. This is an uncharacterized protein from Mycobacterium tuberculosis (strain CDC 1551 / Oshkosh).